The chain runs to 142 residues: Putative pre-16S rRNA nuclease (142 aa).

Belongs to the YqgF nuclease family.

Its subcellular location is the cytoplasm. Could be a nuclease involved in processing of the 5'-end of pre-16S rRNA. The polypeptide is Putative pre-16S rRNA nuclease (Shouchella clausii (strain KSM-K16) (Alkalihalobacillus clausii)).